We begin with the raw amino-acid sequence, 955 residues long: Anion exchange protein 4 (955 aa).

3 disordered regions span residues Val-20–Pro-50, His-154–Gln-190, and Pro-331–Gln-352. 4 helical membrane-spanning segments follow: residues Ala-387 to Gly-407, Gly-415 to Gly-435, Val-472 to Val-492, and Phe-503 to Ala-523. A membrane (anion exchange) region spans residues Ala-387–Asn-955. N-linked (GlcNAc...) asparagine glycans are attached at residues Asn-548 and Asn-572. Transmembrane regions (helical) follow at residues Val-596 to Ala-616, Phe-637 to Met-657, Pro-684 to Met-704, Leu-730 to Ser-750, Leu-785 to Leu-804, Val-811 to Met-830, and Leu-871 to Val-891. The interval Arg-918–Asn-955 is disordered. Asn-951 carries an N-linked (GlcNAc...) asparagine glycan.

Belongs to the anion exchanger (TC 2.A.31) family. As to expression, highly expressed in kidney. Expressed in the outer medulla and the inner medulla in the kidney cortex. Only expressed in beta-intercalated cells.

The protein localises to the lateral cell membrane. It is found in the apical cell membrane. Its subcellular location is the basolateral cell membrane. It carries out the reaction 2 hydrogencarbonate(out) + chloride(in) + Na(+)(out) = 2 hydrogencarbonate(in) + chloride(out) + Na(+)(in). It catalyses the reaction K(+)(in) + 2 hydrogencarbonate(in) + chloride(out) = K(+)(out) + 2 hydrogencarbonate(out) + chloride(in). The enzyme catalyses Li(+)(in) + 2 hydrogencarbonate(in) + chloride(out) = Li(+)(out) + 2 hydrogencarbonate(out) + chloride(in). The catalysed reaction is Rb(+)(in) + 2 hydrogencarbonate(in) + chloride(out) = Rb(+)(out) + 2 hydrogencarbonate(out) + chloride(in). It carries out the reaction Cs(+)(in) + 2 hydrogencarbonate(in) + chloride(out) = Cs(+)(out) + 2 hydrogencarbonate(out) + chloride(in). Its function is as follows. Electroneutral Cl(-)/HCO3(-) antiporter that favors chloride ion entry and efflux of hydrogencarbonate and sodium ion across the basolateral membrane and may participat in salivary secretion. Also mediates Cl(-)/HCO3(-) exchange activity in the presence of K(+) as well as Cs(+), Li(+), and Rb(+). Does not contribute to Cl(-)/HCO3(-) exchanger in the apical membrane of the upper villous epithelium. This chain is Anion exchange protein 4, found in Oryctolagus cuniculus (Rabbit).